The sequence spans 483 residues: Glycogen synthase (483 aa).

Lysine 15 lines the ADP-alpha-D-glucose pocket.

This sequence belongs to the glycosyltransferase 1 family. Bacterial/plant glycogen synthase subfamily.

It carries out the reaction [(1-&gt;4)-alpha-D-glucosyl](n) + ADP-alpha-D-glucose = [(1-&gt;4)-alpha-D-glucosyl](n+1) + ADP + H(+). It functions in the pathway glycan biosynthesis; glycogen biosynthesis. In terms of biological role, synthesizes alpha-1,4-glucan chains using ADP-glucose. This is Glycogen synthase from Thioalkalivibrio sulfidiphilus (strain HL-EbGR7).